Reading from the N-terminus, the 226-residue chain is Exosome complex component Rrp4 (226 aa).

The S1 motif domain maps to 61 to 135; it reads NDLVIGKVNS…RDPLVSISDR (75 aa). In terms of domain architecture, KH spans 141 to 200; the sequence is DSGVLMEISPSKVPRLIGKKGSMIQMIEEATDAAVTIGQNGWVVVSCESPEGLLKAKKAI.

Belongs to the RRP4 family. As to quaternary structure, component of the archaeal exosome complex. Forms a trimer of Rrp4 and/or Csl4 subunits. The trimer associates with a hexameric ring-like arrangement composed of 3 Rrp41-Rrp42 heterodimers.

The protein resides in the cytoplasm. Functionally, non-catalytic component of the exosome, which is a complex involved in RNA degradation. Increases the RNA binding and the efficiency of RNA degradation. Confers strong poly(A) specificity to the exosome. The protein is Exosome complex component Rrp4 of Nitrosopumilus maritimus (strain SCM1).